A 123-amino-acid chain; its full sequence is Large ribosomal subunit protein uL18 (123 aa).

It belongs to the universal ribosomal protein uL18 family. As to quaternary structure, part of the 50S ribosomal subunit; part of the 5S rRNA/L5/L18/L25 subcomplex. Contacts the 5S and 23S rRNAs.

Its function is as follows. This is one of the proteins that bind and probably mediate the attachment of the 5S RNA into the large ribosomal subunit, where it forms part of the central protuberance. The chain is Large ribosomal subunit protein uL18 from Chlamydia trachomatis serovar A (strain ATCC VR-571B / DSM 19440 / HAR-13).